The primary structure comprises 177 residues: FMRFamide-related peptides (177 aa).

The signal sequence occupies residues 1–21 (MNHPRSIAMLAALWLVVSVTS). Positions 22 to 32 (TPVRRSPDLEA) are excised as a propeptide. Phenylalanine amide is present on Phe-45. Positions 47 to 93 (RSTLPVVPPAQPSFLQRYSAPQPAALTADDLMTFLRAYEEDYSSPVS) are excised as a propeptide. Phenylalanine amide is present on residues Phe-102 and Phe-111. Residues 113–131 (RSVDEENSGYQAETNTYPQ) constitute a propeptide that is removed on maturation. A Leucine amide modification is found at Leu-143. Residues 145–177 (RDNELSESNDEDRYEVESERTKRSVVDPCNDCA) constitute a propeptide that is removed on maturation. The interval 145-177 (RDNELSESNDEDRYEVESERTKRSVVDPCNDCA) is disordered. Residues 149–158 (LSESNDEDRY) are compositionally biased toward acidic residues. The span at 159–169 (EVESERTKRSV) shows a compositional bias: basic and acidic residues.

This sequence belongs to the FARP (FMRFamide related peptide) family. Only expressed in the CNS and predominantly in the thoracic ganglia. Strongest expression is seen in two pairs of large neurons in each thoracic ganglion. These neurons are ventrolateral neurosecretory cells 1 and 2, they project their axons through transverse nerves into the periphery where axons from the prothoracic ganglion innervate the prothoracic gland.

It localises to the secreted. In terms of biological role, regulates ecdysteroidogenesis by direct innervation of the prothoracic gland by reducing cAMP production via the receptor for myosuppressin. The neurons that innervate the prothoracic gland during the fifth instar are most active during days 0-4, after which they reduce and then peak again on day 6. Expression suppresses the biosynthesis of steroid hormones called ecdysteroids that elicit molting and metamorphosis. The protein is FMRFamide-related peptides of Bombyx mori (Silk moth).